The following is a 154-amino-acid chain: Low molecular weight protein-tyrosine-phosphatase PtpA (154 aa).

The active-site Nucleophile is the Cys8. Arg14 is an active-site residue. Residue Asp120 is the Proton donor of the active site.

Belongs to the low molecular weight phosphotyrosine protein phosphatase family. In terms of assembly, interacts with host CORO1A. Phosphorylations at Tyr-122 and Tyr-123 are essential for phosphatase activity.

It localises to the secreted. The enzyme catalyses O-phospho-L-tyrosyl-[protein] + H2O = L-tyrosyl-[protein] + phosphate. In terms of biological role, secreted tyrosine phosphatase that plays a critical role during infection as a bacterial effector protein that counteracts host defenses. Required for intramacrophage survival. This Staphylococcus aureus (strain MRSA252) protein is Low molecular weight protein-tyrosine-phosphatase PtpA (ptpA).